Consider the following 150-residue polypeptide: Cell division protein SepF (150 aa).

The protein belongs to the SepF family. As to quaternary structure, homodimer. Interacts with FtsZ.

Its subcellular location is the cytoplasm. In terms of biological role, cell division protein that is part of the divisome complex and is recruited early to the Z-ring. Probably stimulates Z-ring formation, perhaps through the cross-linking of FtsZ protofilaments. Its function overlaps with FtsA. This chain is Cell division protein SepF, found in Clostridium beijerinckii (strain ATCC 51743 / NCIMB 8052) (Clostridium acetobutylicum).